The sequence spans 198 residues: Putative glutathione S-transferase alpha-5 (198 aa).

The 77-residue stretch at Thr2–Gly78 folds into the GST N-terminal domain. Glutathione contacts are provided by residues Tyr8, Arg42, Gln49–Leu50, and Gln62–Thr63. Residues Thr80 to Phe198 enclose the GST C-terminal domain.

It belongs to the GST superfamily. Alpha family.

The enzyme catalyses RX + glutathione = an S-substituted glutathione + a halide anion + H(+). In terms of biological role, conjugation of reduced glutathione to a wide number of exogenous and endogenous hydrophobic electrophiles. This chain is Putative glutathione S-transferase alpha-5 (gsta5), found in Dictyostelium discoideum (Social amoeba).